A 402-amino-acid polypeptide reads, in one-letter code: Phosphoglycerate kinase (402 aa).

Residues D24–N26, R41, H64–R67, R123, and R156 each bind substrate. ATP is bound by residues K207, G298, E329, and G358–S361.

This sequence belongs to the phosphoglycerate kinase family. In terms of assembly, monomer.

The protein resides in the cytoplasm. The catalysed reaction is (2R)-3-phosphoglycerate + ATP = (2R)-3-phospho-glyceroyl phosphate + ADP. The protein operates within carbohydrate degradation; glycolysis; pyruvate from D-glyceraldehyde 3-phosphate: step 2/5. This is Phosphoglycerate kinase from Microcystis aeruginosa (strain NIES-843 / IAM M-2473).